The primary structure comprises 306 residues: Protein farnesyltransferase/geranylgeranyltransferase type-1 subunit alpha (306 aa).

5 PFTA repeats span residues 48 to 82 (YSER…NLPN), 84 to 118 (NLYD…QIME), 125 to 159 (DPYR…TFDL), 161 to 195 (NDAK…SKKH), and 201 to 235 (TIDE…RFDR).

This sequence belongs to the protein prenyltransferase subunit alpha family. As to quaternary structure, heterodimer of an alpha and a beta subunit. It depends on Mg(2+) as a cofactor.

It catalyses the reaction L-cysteinyl-[protein] + (2E,6E)-farnesyl diphosphate = S-(2E,6E)-farnesyl-L-cysteinyl-[protein] + diphosphate. The catalysed reaction is geranylgeranyl diphosphate + L-cysteinyl-[protein] = S-geranylgeranyl-L-cysteinyl-[protein] + diphosphate. Its function is as follows. Essential subunit of both the farnesyltransferase and the geranylgeranyltransferase complex. Contributes to the transfer of a farnesyl or geranylgeranyl moiety from farnesyl or geranylgeranyl diphosphate to a cysteine at the fourth position from the C-terminus of several proteins having the C-terminal sequence Cys-aliphatic-aliphatic-X. The protein is Protein farnesyltransferase/geranylgeranyltransferase type-1 subunit alpha (RAM2) of Candida albicans (Yeast).